A 117-amino-acid chain; its full sequence is Immunoglobulin heavy variable 1-45 (117 aa).

Residues 1 to 19 form the signal peptide; that stretch reads MDWTWRILFLVAAVTDAYS. A framework-1 region spans residues 20–44; the sequence is QMQLVQSGAEVKKTGSSVKVSCKAS. The region spanning 20–117 is the Ig-like domain; that stretch reads QMQLVQSGAE…EDTAMYYCAR (98 aa). The cysteines at positions 41 and 115 are disulfide-linked. The tract at residues 45 to 52 is complementarity-determining-1; that stretch reads GYTFTYRY. A framework-2 region spans residues 53–69; sequence LHWVRQAPGQALEWMGW. Residues 70–77 form a complementarity-determining-2 region; the sequence is ITPFNGNT. Residues 78-115 are framework-3; the sequence is NYAQKFQDRVTITRDRSMSTAYMELSSLRSEDTAMYYC. Residues 116–117 form a complementarity-determining-3 region; that stretch reads AR.

As to quaternary structure, immunoglobulins are composed of two identical heavy chains and two identical light chains; disulfide-linked.

Its subcellular location is the secreted. The protein resides in the cell membrane. V region of the variable domain of immunoglobulin heavy chains that participates in the antigen recognition. Immunoglobulins, also known as antibodies, are membrane-bound or secreted glycoproteins produced by B lymphocytes. In the recognition phase of humoral immunity, the membrane-bound immunoglobulins serve as receptors which, upon binding of a specific antigen, trigger the clonal expansion and differentiation of B lymphocytes into immunoglobulins-secreting plasma cells. Secreted immunoglobulins mediate the effector phase of humoral immunity, which results in the elimination of bound antigens. The antigen binding site is formed by the variable domain of one heavy chain, together with that of its associated light chain. Thus, each immunoglobulin has two antigen binding sites with remarkable affinity for a particular antigen. The variable domains are assembled by a process called V-(D)-J rearrangement and can then be subjected to somatic hypermutations which, after exposure to antigen and selection, allow affinity maturation for a particular antigen. This chain is Immunoglobulin heavy variable 1-45, found in Homo sapiens (Human).